A 150-amino-acid polypeptide reads, in one-letter code: MAGLPPLLLGTYTPKIDAKGRMALPAKFRSQLGQGLVMARGQERCVYLLPFDEFRRIASQIQRVSVGNKAAREYLRVFLSGAVDQQPDKQGRVLVPQMLRDYANLGSDVVVIGVGTRAELWNKDTWESYLAEKEEGYSDIADDVLPEVEF.

SpoVT-AbrB domains follow at residues 11–53 (TYTP…PFDE) and 82–125 (AVDQ…NKDT).

It belongs to the MraZ family. In terms of assembly, forms oligomers.

Its subcellular location is the cytoplasm. The protein localises to the nucleoid. The protein is Transcriptional regulator MraZ of Bifidobacterium longum (strain NCC 2705).